We begin with the raw amino-acid sequence, 130 residues long: UPF0212 protein PF1486 (130 aa).

The protein belongs to the UPF0212 family.

This is UPF0212 protein PF1486 from Pyrococcus furiosus (strain ATCC 43587 / DSM 3638 / JCM 8422 / Vc1).